Consider the following 186-residue polypeptide: Ribosome-recycling factor (186 aa).

It belongs to the RRF family.

The protein localises to the cytoplasm. Responsible for the release of ribosomes from messenger RNA at the termination of protein biosynthesis. May increase the efficiency of translation by recycling ribosomes from one round of translation to another. The polypeptide is Ribosome-recycling factor (Bartonella tribocorum (strain CIP 105476 / IBS 506)).